Here is a 245-residue protein sequence, read N- to C-terminus: NAD-dependent protein deacylase (245 aa).

The Deacetylase sirtuin-type domain maps to 1 to 237 (MNFPYRNIVV…PKLVEELLAH (237 aa)). 13 to 32 (GAGISAESGIQTFRAQDGLW) provides a ligand contact to NAD(+). Residues tyrosine 57 and arginine 60 each coordinate substrate. Residue 94–97 (QNID) coordinates NAD(+). Histidine 112 (proton acceptor) is an active-site residue. Cysteine 120 and cysteine 139 together coordinate Zn(2+). NAD(+) contacts are provided by residues 179-181 (GTS), 205-207 (NLE), and alanine 223.

Belongs to the sirtuin family. Class III subfamily. The cofactor is Zn(2+).

Its subcellular location is the cytoplasm. The enzyme catalyses N(6)-acetyl-L-lysyl-[protein] + NAD(+) + H2O = 2''-O-acetyl-ADP-D-ribose + nicotinamide + L-lysyl-[protein]. It catalyses the reaction N(6)-succinyl-L-lysyl-[protein] + NAD(+) + H2O = 2''-O-succinyl-ADP-D-ribose + nicotinamide + L-lysyl-[protein]. In terms of biological role, NAD-dependent lysine deacetylase and desuccinylase that specifically removes acetyl and succinyl groups on target proteins. Modulates the activities of several proteins which are inactive in their acylated form. The chain is NAD-dependent protein deacylase from Vibrio vulnificus (strain YJ016).